Here is a 515-residue protein sequence, read N- to C-terminus: 2-isopropylmalate synthase (515 aa).

A Pyruvate carboxyltransferase domain is found at 5-267; the sequence is VIIFDTTLRD…DTHINTQEIH (263 aa). The Mn(2+) site is built by aspartate 14, histidine 202, histidine 204, and asparagine 238. Positions 392 to 515 are regulatory domain; sequence VLDKLSAHST…VADIKNHKHH (124 aa).

Belongs to the alpha-IPM synthase/homocitrate synthase family. LeuA type 1 subfamily. Homodimer. The cofactor is Mn(2+).

Its subcellular location is the cytoplasm. It carries out the reaction 3-methyl-2-oxobutanoate + acetyl-CoA + H2O = (2S)-2-isopropylmalate + CoA + H(+). It functions in the pathway amino-acid biosynthesis; L-leucine biosynthesis; L-leucine from 3-methyl-2-oxobutanoate: step 1/4. Catalyzes the condensation of the acetyl group of acetyl-CoA with 3-methyl-2-oxobutanoate (2-ketoisovalerate) to form 3-carboxy-3-hydroxy-4-methylpentanoate (2-isopropylmalate). The polypeptide is 2-isopropylmalate synthase (Haemophilus influenzae (strain ATCC 51907 / DSM 11121 / KW20 / Rd)).